A 116-amino-acid chain; its full sequence is Small ribosomal subunit protein bS16 (116 aa).

Belongs to the bacterial ribosomal protein bS16 family.

In Chlamydia trachomatis serovar A (strain ATCC VR-571B / DSM 19440 / HAR-13), this protein is Small ribosomal subunit protein bS16.